The sequence spans 143 residues: uncharacterized protein (143 aa).

This is an uncharacterized protein from Saccharomyces cerevisiae (strain ATCC 204508 / S288c) (Baker's yeast).